The primary structure comprises 253 residues: DNA repair protein RecO (253 aa).

It belongs to the RecO family.

In terms of biological role, involved in DNA repair and RecF pathway recombination. This Nitrobacter hamburgensis (strain DSM 10229 / NCIMB 13809 / X14) protein is DNA repair protein RecO.